Reading from the N-terminus, the 85-residue chain is MAHKKAGGSTRNGRDSEAKRLGVKRFGGESVLAGSIIVRQRGTKFHAGANVGCGRDHTLFAKADGKVKFEVKGPKNRKFISIEAE.

The disordered stretch occupies residues 1–20 (MAHKKAGGSTRNGRDSEAKR).

This sequence belongs to the bacterial ribosomal protein bL27 family.

The protein is Large ribosomal subunit protein bL27 of Escherichia coli O139:H28 (strain E24377A / ETEC).